We begin with the raw amino-acid sequence, 386 residues long: Chaperone protein DnaJ (386 aa).

Residues 5–69 form the J domain; sequence DLYDVLGVKK…QKRAQYDQFG (65 aa). A CR-type zinc finger spans residues 140–224; it reads GKETSIKYNR…CHGAGVTEER (85 aa). Cysteine 153, cysteine 156, cysteine 170, cysteine 173, cysteine 196, cysteine 199, cysteine 212, and cysteine 215 together coordinate Zn(2+). CXXCXGXG motif repeat units lie at residues 153–160, 170–177, 196–203, and 212–219; these read CHTCHGSG, CSTCHGQG, CPTCGGKG, and CDTCHGAG.

It belongs to the DnaJ family. As to quaternary structure, homodimer. Zn(2+) serves as cofactor.

It localises to the cytoplasm. Functionally, participates actively in the response to hyperosmotic and heat shock by preventing the aggregation of stress-denatured proteins and by disaggregating proteins, also in an autonomous, DnaK-independent fashion. Unfolded proteins bind initially to DnaJ; upon interaction with the DnaJ-bound protein, DnaK hydrolyzes its bound ATP, resulting in the formation of a stable complex. GrpE releases ADP from DnaK; ATP binding to DnaK triggers the release of the substrate protein, thus completing the reaction cycle. Several rounds of ATP-dependent interactions between DnaJ, DnaK and GrpE are required for fully efficient folding. Also involved, together with DnaK and GrpE, in the DNA replication of plasmids through activation of initiation proteins. The protein is Chaperone protein DnaJ of Limosilactobacillus fermentum (strain NBRC 3956 / LMG 18251) (Lactobacillus fermentum).